A 334-amino-acid chain; its full sequence is WD repeat domain 54 (334 aa).

WD repeat units lie at residues 162–206 (GHQT…TLLT), 208–247 (IAGF…LHIQ), and 250–289 (AHAR…ESGS).

Homodimer and homotrimer; forms tight forms of dimers and trimers. Interacts with IZUMO1 and IZUMO1R/JUNO. Cross-linked to tightly form both dimers and trimers by TGM2. Cross-linking enhances the activation of EGF receptor-mediated signaling pathway. Cross-linking is inhibited by EGF. Post-translationally, ubiquitinated. EGF increases ubiquitination. In terms of tissue distribution, widely expressed in the ovary and testis (at protein level).

The protein localises to the vesicle. The protein resides in the cytoplasm. Its subcellular location is the cell membrane. Plays a role in the adhesion and fusion of the sperm-oocyte membrane through its interactions with IZUMO1 and IZUMO1R/JUNO. When cross-linked to form dimers and trimers, it has a regulatory effect on ERK signaling pathway activity in response to EGF stimulation. Colocalizes with the EGF receptor in WDR54-specific vesicle where it sustains the internalization and controls the degradation of the EGF receptor after EGF stimulation. In Rattus norvegicus (Rat), this protein is WD repeat domain 54 (Wdr54).